An 813-amino-acid polypeptide reads, in one-letter code: Protein PPP4R3C1 (813 aa).

Positions 730–813 (NESESAIEGQ…PPPKRPNLST (84 aa)) are disordered. The span at 777 to 788 (YDTDDENDDDPY) shows a compositional bias: acidic residues.

Belongs to the SMEK family.

The sequence is that of Protein PPP4R3C1 from Mus musculus (Mouse).